Consider the following 270-residue polypeptide: Glucosamine-6-phosphate deaminase (270 aa).

Asp72 functions as the Proton acceptor; for enolization step in the catalytic mechanism. Asp141 acts as the For ring-opening step in catalysis. His143 functions as the Proton acceptor; for ring-opening step in the catalytic mechanism. Glu148 (for ring-opening step) is an active-site residue.

The protein belongs to the glucosamine/galactosamine-6-phosphate isomerase family. NagB subfamily.

It catalyses the reaction alpha-D-glucosamine 6-phosphate + H2O = beta-D-fructose 6-phosphate + NH4(+). The protein operates within amino-sugar metabolism; N-acetylneuraminate degradation; D-fructose 6-phosphate from N-acetylneuraminate: step 5/5. Allosterically activated by N-acetylglucosamine 6-phosphate (GlcNAc6P). Its function is as follows. Catalyzes the reversible isomerization-deamination of glucosamine 6-phosphate (GlcN6P) to form fructose 6-phosphate (Fru6P) and ammonium ion. This is Glucosamine-6-phosphate deaminase (nagB) from Bacteroides thetaiotaomicron (strain ATCC 29148 / DSM 2079 / JCM 5827 / CCUG 10774 / NCTC 10582 / VPI-5482 / E50).